Consider the following 877-residue polypeptide: MISSSRVAAMALRQSSRAIVPLAVLSSNGLRSRYFTPGLAHKTQIRTVTSDIAEIKQEIDKDESDNSAETTGVIDVKNQHEVVLYYDHIYFLGASSPAYFNVFLQFLRIRKQTPAQIRDKILKVSAPIPAEAEITQLIPFMRDCGAFAKFQVPPGVEVAEFVQQIRQNVVHNEKAYNSGIFRRVLSLFWSHYPAVYSVKGTPWIEDLRRYPNTKLKVKFEGEPLTEEELYVLFRRYGPLVDIIPGPESAEATLIYRGLRSAIAAKNCITGVSLNKGRTVLHLQYIPIKRVNYITEFVTNHQRIAIPIILALLATLAVLIFDPIRQYFIEVKITKRYSFDTYKDYAVVKTITKPLRVVHNWLSSSYDYIDKKIDSISSPGTASDEKSDDSDVSQALQTASTIWNERSEKSKQIKMWIYENVNTFIIVKGPKGSGKEEFILDHTLLNDEKLRHKILYINCSELAKARSDNDLLKSTANQLGYFPLFTWTNTVSQFVDLGVQGLTGQKSGLSESKETQLKNMFTLTSQAIRSIATRDYQKYHASVTRKNNRLPEGENIEILKEEEYLQQHPECKPIVVIDKFNRKADAASNDFVYPMIAEWSSVLVQNNLAHVIYVTSDVGSIQHLNNALPNQVFKSISLSDASSFSAKSFLMHQLKLEDDHTISGAFEPLGGRMLDLQAFVRRINSGETPPEALEEMVNQASEQVTTFFLCAHKIDDDTNWNAAQVWMLMKLLSKSDSINYSDLNKSPLFKPEEDTVATLTTLEKHDLISLQRDKGILDKISIGRPLFKAAFKQLISDPKISKLYEVDYISTLIKIENEKIKKFEGELISIQKLGDKLGSRVLYLSKKIDASNAKVVEYEGKIAEINSKPASKNFLKLF.

Residues 1–47 (MISSSRVAAMALRQSSRAIVPLAVLSSNGLRSRYFTPGLAHKTQIRT) constitute a mitochondrion transit peptide. Residues 48–302 (VTSDIAEIKQ…ITEFVTNHQR (255 aa)) lie on the Mitochondrial matrix side of the membrane. In terms of domain architecture, RRM spans 213-286 (TKLKVKFEGE…RTVLHLQYIP (74 aa)). A helical transmembrane segment spans residues 303-323 (IAIPIILALLATLAVLIFDPI). The Mitochondrial intermembrane portion of the chain corresponds to 324-877 (RQYFIEVKIT…PASKNFLKLF (554 aa)).

It belongs to the YME2 family.

The protein resides in the mitochondrion inner membrane. Functionally, plays a role in maintaining the mitochondrial genome and in controlling the mtDNA escape. Involved in the regulation of mtDNA nucleotide structure and number. May have a dispensable role in early maturation of pre-rRNA. The sequence is that of Mitochondrial escape protein 2 (YME2) from Scheffersomyces stipitis (strain ATCC 58785 / CBS 6054 / NBRC 10063 / NRRL Y-11545) (Yeast).